Reading from the N-terminus, the 436-residue chain is Lactonohydrolase oryL (436 aa).

An N-terminal signal peptide occupies residues 1 to 27 (MLSYTSHCLQALLGVASLPYRQYQAYS).

It belongs to the SMP-30/CGR1 family.

It functions in the pathway secondary metabolite biosynthesis. Lactonohydrolase; part of the gene cluster that mediates the biosynthesis of oryzines, natural products with an unusual maleidride backbone. The two subunits of the fungal fatty acid synthase oryfasA and oryfasB probably form octenoic acid. This fatty acid is most likely activated by the acyl-CoA ligase oryP to give octenyl-CoA before the citrate synthase-like protein oryE catalyzes condensation with oxaloacetate to form tricarboxylic acid. The next steps of the pathways are conjectural, but a favorite possible route has been proposed, beginning with decarboxylation and concomitant dehydration by the decarboxylase oryM, followed by tautomerization, which may lead to the production of a diene intermediate. Reduction of this diene intermediate could give the known metabolite piliformic acid. On the pathway to oryzine B and oryzine A, however, hydroxylation of the diene by the alpha-ketoglutarate-dependent dioxygenase oryG and lactonisation by the lactonohydrolases oryH or oryL could give oryzine B directly. Finally, enoyl reduction by the dehydrogenase oryD would then convert oryzine B into oryzine A. This chain is Lactonohydrolase oryL, found in Aspergillus oryzae (strain ATCC 42149 / RIB 40) (Yellow koji mold).